A 298-amino-acid polypeptide reads, in one-letter code: Tyrosine recombinase XerC (298 aa).

The 84-residue stretch at 1–84 (MNHIQEAFLN…TLRTLYEYWM (84 aa)) folds into the Core-binding (CB) domain. Residues 105-286 (YLPQFSLEEE…SNQQLRKVYL (182 aa)) enclose the Tyr recombinase domain. Catalysis depends on residues R145, K169, H238, R241, and H264. Residue Y273 is the O-(3'-phospho-DNA)-tyrosine intermediate of the active site.

The protein belongs to the 'phage' integrase family. XerC subfamily. As to quaternary structure, forms a cyclic heterotetrameric complex composed of two molecules of XerC and two molecules of XerD.

The protein localises to the cytoplasm. In terms of biological role, site-specific tyrosine recombinase, which acts by catalyzing the cutting and rejoining of the recombining DNA molecules. The XerC-XerD complex is essential to convert dimers of the bacterial chromosome into monomers to permit their segregation at cell division. It also contributes to the segregational stability of plasmids. This is Tyrosine recombinase XerC from Staphylococcus aureus.